Consider the following 447-residue polypeptide: Phosphoglucosamine mutase (447 aa).

S88 acts as the Phosphoserine intermediate in catalysis. Positions 88, 231, 233, and 235 each coordinate Mg(2+). S88 bears the Phosphoserine mark.

This sequence belongs to the phosphohexose mutase family. Monomer. Also forms large aggregates. Mg(2+) serves as cofactor. Activated by phosphorylation. Glucose-1,6-bisphosphate or fructose-1,6-bisphosphate can activate the enzyme in vitro. However, since glucose-1,6-bisphosphate is not believed to form in methanogens, the physiologically relevant activator might be a serine kinase protein.

It carries out the reaction alpha-D-glucosamine 1-phosphate = D-glucosamine 6-phosphate. Its function is as follows. Catalyzes the conversion of glucosamine-6-phosphate to glucosamine-1-phosphate. Also catalyzes the isomerization of glucose-1-phosphate to glucose-6-phosphate, but at a 5-fold lower rate. This is Phosphoglucosamine mutase (glmM) from Methanococcus maripaludis (strain DSM 14266 / JCM 13030 / NBRC 101832 / S2 / LL).